A 931-amino-acid chain; its full sequence is Dipeptidyl aminopeptidase A (931 aa).

Residues 1–13 show a composition bias toward basic residues; that stretch reads MSASTHSHKRKNS. A disordered region spans residues 1–58; it reads MSASTHSHKRKNSHLFPQRKSSNSSMDKPFFPNNDSVANTDPQSNENGHTINEIRPTE. Residues 1-119 lie on the Cytoplasmic side of the membrane; that stretch reads MSASTHSHKR…GEWSLPEKRS (119 aa). Polar residues predominate over residues 33 to 50; sequence NNDSVANTDPQSNENGHT. The chain crosses the membrane as a helical; Signal-anchor for type II membrane protein span at residues 120–140; the sequence is YVLVFTLIALSVLVLLVILIP. Over 141–931 the chain is Lumenal; sequence SKLLPTKITR…RFDNTEVLHL (791 aa). Residue Asn377 is glycosylated (N-linked (GlcNAc...) asparagine). Ser785 serves as the catalytic Charge relay system. N-linked (GlcNAc...) asparagine glycosylation is present at Asn814. Residues Asp863 and His896 each act as charge relay system in the active site.

It belongs to the peptidase S9B family.

It localises to the vacuole membrane. Its function is as follows. Responsible for the proteolytic maturation of the alpha-factor precursor. The sequence is that of Dipeptidyl aminopeptidase A (STE13) from Saccharomyces cerevisiae (strain ATCC 204508 / S288c) (Baker's yeast).